A 286-amino-acid chain; its full sequence is Probable tRNA(His) guanylyltransferase (286 aa).

Asp-29, Gly-30, and Asp-76 together coordinate Mg(2+). GTP contacts are provided by residues 29 to 34 (DGKKFH) and 75 to 76 (SD).

This sequence belongs to the tRNA(His) guanylyltransferase family. It depends on Mg(2+) as a cofactor.

It catalyses the reaction a 5'-end ribonucleotide-tRNA(His) + GTP + ATP + H2O = a 5'-end phospho-guanosine-ribonucleotide-tRNA(His) + AMP + 2 diphosphate + H(+). Adds a GMP to the 5'-end of tRNA(His) after transcription and RNase P cleavage. In Drosophila melanogaster (Fruit fly), this protein is Probable tRNA(His) guanylyltransferase.